The chain runs to 557 residues: Laccase-11 (557 aa).

The first 23 residues, 1–23 (MKMGFLFLFCYLLAFLGYSPVDA), serve as a signal peptide directing secretion. Plastocyanin-like domains follow at residues 31 to 147 (DVQV…PAPG) and 158 to 308 (ESNI…YKGV). N-linked (GlcNAc...) asparagine glycosylation is found at asparagine 36, asparagine 69, and asparagine 77. The Cu cation site is built by histidine 81 and histidine 83. Asparagine 115 carries an N-linked (GlcNAc...) asparagine glycan. Positions 126 and 128 each coordinate Cu cation. Asparagine 240, asparagine 296, asparagine 323, asparagine 371, asparagine 381, asparagine 398, asparagine 416, and asparagine 440 each carry an N-linked (GlcNAc...) asparagine glycan. One can recognise a Plastocyanin-like 3 domain in the interval 406 to 541 (DFPDRPPKAF…KMAFVVENGE (136 aa)). Residues histidine 458, histidine 461, histidine 463, histidine 520, cysteine 521, histidine 522, and histidine 526 each coordinate Cu cation.

This sequence belongs to the multicopper oxidase family. Cu cation is required as a cofactor. Ubiquitous and constitutive.

The protein resides in the secreted. The protein localises to the extracellular space. It localises to the apoplast. It carries out the reaction 4 hydroquinone + O2 = 4 benzosemiquinone + 2 H2O. Functionally, lignin degradation and detoxification of lignin-derived products. This Arabidopsis thaliana (Mouse-ear cress) protein is Laccase-11 (LAC11).